Here is a 205-residue protein sequence, read N- to C-terminus: Small ribosomal subunit protein bS16 (205 aa).

Positions 110–205 are disordered; it reads GEEVKIAVGT…ADDNEEPEDE (96 aa). Over residues 123–132 the composition is skewed to basic and acidic residues; that stretch reads DPLERERERA. The segment covering 153 to 205 has biased composition (acidic residues); that stretch reads EETEAEEAEDVETADAEDADAASETDEPEAAADEADETDASADADDNEEPEDE.

This sequence belongs to the bacterial ribosomal protein bS16 family.

The protein is Small ribosomal subunit protein bS16 of Salinibacter ruber (strain DSM 13855 / M31).